The chain runs to 173 residues: NADH-ubiquinone oxidoreductase chain 6 (173 aa).

5 helical membrane-spanning segments follow: residues 1–21 (MTYF…GVAS), 27–47 (YGVV…LSLG), 48–68 (VSFV…VVFV), 87–107 (VVGY…IGGL), and 139–159 (CGVG…FVVL).

Belongs to the complex I subunit 6 family.

It is found in the mitochondrion membrane. It catalyses the reaction a ubiquinone + NADH + 5 H(+)(in) = a ubiquinol + NAD(+) + 4 H(+)(out). Functionally, core subunit of the mitochondrial membrane respiratory chain NADH dehydrogenase (Complex I) that is believed to belong to the minimal assembly required for catalysis. Complex I functions in the transfer of electrons from NADH to the respiratory chain. The immediate electron acceptor for the enzyme is believed to be ubiquinone. The protein is NADH-ubiquinone oxidoreductase chain 6 (MT-ND6) of Synthliboramphus hypoleucus (Guadalupe murrelet).